A 193-amino-acid chain; its full sequence is Ribonuclease HII (193 aa).

The RNase H type-2 domain maps to 15 to 193 (CIVAGIDEAG…PYHRRSFRCC (179 aa)). The a divalent metal cation site is built by aspartate 21, glutamate 22, and aspartate 112.

This sequence belongs to the RNase HII family. The cofactor is Mn(2+). Requires Mg(2+) as cofactor.

The protein resides in the cytoplasm. The catalysed reaction is Endonucleolytic cleavage to 5'-phosphomonoester.. Functionally, endonuclease that specifically degrades the RNA of RNA-DNA hybrids. This is Ribonuclease HII from Rickettsia conorii (strain ATCC VR-613 / Malish 7).